We begin with the raw amino-acid sequence, 143 residues long: Peptide methionine sulfoxide reductase MsrB (143 aa).

The 123-residue stretch at K5–K127 folds into the MsrB domain. The active-site Nucleophile is C116.

Belongs to the MsrB Met sulfoxide reductase family.

The enzyme catalyses L-methionyl-[protein] + [thioredoxin]-disulfide + H2O = L-methionyl-(R)-S-oxide-[protein] + [thioredoxin]-dithiol. This chain is Peptide methionine sulfoxide reductase MsrB, found in Bacillus pumilus (strain SAFR-032).